Here is a 648-residue protein sequence, read N- to C-terminus: Biosynthetic arginine decarboxylase (648 aa).

Residue Lys109 is modified to N6-(pyridoxal phosphate)lysine. 291-301 (IDVGGGLGIDF) provides a ligand contact to substrate.

This sequence belongs to the Orn/Lys/Arg decarboxylase class-II family. SpeA subfamily. Mg(2+) is required as a cofactor. The cofactor is pyridoxal 5'-phosphate.

The catalysed reaction is L-arginine + H(+) = agmatine + CO2. It participates in amine and polyamine biosynthesis; agmatine biosynthesis; agmatine from L-arginine: step 1/1. Catalyzes the biosynthesis of agmatine from arginine. The polypeptide is Biosynthetic arginine decarboxylase (Prochlorococcus marinus (strain MIT 9312)).